The chain runs to 489 residues: Beta-1,3-glucosyltransferase (489 aa).

Methionine 1 is a topological domain (cytoplasmic). The chain crosses the membrane as a helical; Signal-anchor for type II membrane protein span at residues 2–22; sequence RPPALLALFSCSAAFALMSEE. Over 23 to 489 the chain is Lumenal; that stretch reads IKEKVTPSQD…ETQKDPREEL (467 aa). N-linked (GlcNAc...) asparagine glycosylation is present at asparagine 78. The short motif at 486 to 489 is the Prevents secretion from ER element; that stretch reads REEL.

It belongs to the glycosyltransferase 31 family.

The protein localises to the endoplasmic reticulum membrane. The protein operates within protein modification; protein glycosylation. In terms of biological role, O-glucosyltransferase that transfers glucose toward fucose with a beta-1,3 linkage. Specifically glucosylates O-linked fucosylglycan on TSP type-1 domains of proteins, thereby contributing to elongation of O-fucosylglycan. The protein is Beta-1,3-glucosyltransferase of Mus musculus (Mouse).